The sequence spans 338 residues: Ketol-acid reductoisomerase (NADP(+)) (338 aa).

The 181-residue stretch at 1 to 181 folds into the KARI N-terminal Rossmann domain; sequence MKIYYDKDCN…GGGKAGIIET (181 aa). NADP(+) contacts are provided by residues 24–27, Lys-47, Ser-50, Ser-52, and 82–85; these read YGSQ and DEIQ. His-107 is a catalytic residue. Residue Gly-133 participates in NADP(+) binding. The region spanning 182–327 is the KARI C-terminal knotted domain; it reads SFKEETETDL…ARLRSMMAWI (146 aa). Asp-190, Glu-194, Glu-226, and Glu-230 together coordinate Mg(2+). Ser-251 is a binding site for substrate.

The protein belongs to the ketol-acid reductoisomerase family. Mg(2+) serves as cofactor.

It carries out the reaction (2R)-2,3-dihydroxy-3-methylbutanoate + NADP(+) = (2S)-2-acetolactate + NADPH + H(+). The catalysed reaction is (2R,3R)-2,3-dihydroxy-3-methylpentanoate + NADP(+) = (S)-2-ethyl-2-hydroxy-3-oxobutanoate + NADPH + H(+). The protein operates within amino-acid biosynthesis; L-isoleucine biosynthesis; L-isoleucine from 2-oxobutanoate: step 2/4. Its pathway is amino-acid biosynthesis; L-valine biosynthesis; L-valine from pyruvate: step 2/4. Functionally, involved in the biosynthesis of branched-chain amino acids (BCAA). Catalyzes an alkyl-migration followed by a ketol-acid reduction of (S)-2-acetolactate (S2AL) to yield (R)-2,3-dihydroxy-isovalerate. In the isomerase reaction, S2AL is rearranged via a Mg-dependent methyl migration to produce 3-hydroxy-3-methyl-2-ketobutyrate (HMKB). In the reductase reaction, this 2-ketoacid undergoes a metal-dependent reduction by NADPH to yield (R)-2,3-dihydroxy-isovalerate. In Geotalea uraniireducens (strain Rf4) (Geobacter uraniireducens), this protein is Ketol-acid reductoisomerase (NADP(+)).